Here is a 453-residue protein sequence, read N- to C-terminus: MQVKETVTDGLKREFQVTLAVSDIGSQVDARLDELKDKVRLNGFRPGKVPLSHLKRTYGRSVTAEVLEKLIRETNDNIFTERGFRLATEPKITMPTEAKEVEDVLAGNADLNYTVAVEVVPEIQLVDFKTISVEKPVVEVGDSDVDDAIKRIVEANRGYDDKGEGATAASGDRVTVSFKGSIDGTPFDGGSAEGIPVVIGSGTFIPGFEDQLIGIAVGETRTIKATFPTNYATAELAGKAAEFETTATLVEAPKDTPADDEFAKTLGLESLDKLKEAARGRLAAEYAGVSRQRVKRALLDRLDEAHQFEAPATLVEQEFEALWRSIVGEMTSTGSTFESENTTEDAAKEEYRKIADRRVRLGLVLSEIGEKNKIQVTDDEVSRAVMERARQMPGREKEVWEFYRKTPEAVAQLRAPIFEDKVVDFILELATVTEKPVSKEELYKDDDADKSAA.

One can recognise a PPIase FKBP-type domain in the interval 171-256 (GDRVTVSFKG…ATLVEAPKDT (86 aa)).

This sequence belongs to the FKBP-type PPIase family. Tig subfamily.

The protein resides in the cytoplasm. It carries out the reaction [protein]-peptidylproline (omega=180) = [protein]-peptidylproline (omega=0). Involved in protein export. Acts as a chaperone by maintaining the newly synthesized protein in an open conformation. Functions as a peptidyl-prolyl cis-trans isomerase. The protein is Trigger factor of Rhodopseudomonas palustris (strain BisA53).